The primary structure comprises 336 residues: N-lysine methyltransferase KMT5A (336 aa).

The interval 1–112 (MGRGKKMSKP…KPSEQRETEC (112 aa)) is disordered. Over residues 67–93 (SVAHHESKCPGKPLTETRKKAEVEKKR) the composition is skewed to basic and acidic residues. An SET domain is found at 200–321 (EGMKMDMITG…VGEELLYDYG (122 aa)). S-adenosyl-L-methionine-binding positions include 210 to 212 (KGR), tyrosine 255, and 282 to 283 (NH).

Belongs to the class V-like SAM-binding methyltransferase superfamily. Histone-lysine methyltransferase family. PR/SET subfamily.

It is found in the nucleus. The protein localises to the chromosome. It carries out the reaction L-lysyl(20)-[histone H4] + S-adenosyl-L-methionine = N(6)-methyl-L-lysyl(20)-[histone H4] + S-adenosyl-L-homocysteine + H(+). It catalyses the reaction L-lysyl-[protein] + S-adenosyl-L-methionine = N(6)-methyl-L-lysyl-[protein] + S-adenosyl-L-homocysteine + H(+). Its function is as follows. Protein-lysine N-methyltransferase that monomethylates both histones and non-histone proteins. Specifically monomethylates 'Lys-20' of histone H4 (H4K20me1). H4K20me1 is enriched during mitosis and represents a specific tag for epigenetic transcriptional repression. Mainly functions in euchromatin regions, thereby playing a central role in the silencing of euchromatic genes. Required for cell proliferation, probably by contributing to the maintenance of proper higher-order structure of DNA during mitosis. Involved in chromosome condensation and proper cytokinesis. Nucleosomes are preferred as substrate compared to free histones. Mediates monomethylation of p53/TP53 at 'Lys-382', leading to repress p53/TP53-target genes. Plays a negative role in TGF-beta response regulation and a positive role in cell migration. The sequence is that of N-lysine methyltransferase KMT5A from Xenopus tropicalis (Western clawed frog).